The following is a 774-amino-acid chain: Multiple C2 domain and transmembrane region protein 11 (774 aa).

Residues 1 to 12 (MAVNGTGNGTGD) show a composition bias toward gly residues. Positions 1–30 (MAVNGTGNGTGDGDFSLKETSPNIGNGGVN) are disordered. C2 domains follow at residues 9–145 (GTGD…PQWY), 184–307 (VTGE…SLWY), and 338–471 (LDES…THSY). Ca(2+) contacts are provided by Asp62, Asn110, Asp112, and Asp118. Helical transmembrane passes span 608–628 (LFVV…CFVF) and 722–742 (FVSC…FLAF).

It belongs to the MCTP family. Ca(2+) is required as a cofactor. Observed in flowers.

Its subcellular location is the endoplasmic reticulum membrane. Functionally, may function as a signaling molecule by regulating the trafficking of other regulators. The sequence is that of Multiple C2 domain and transmembrane region protein 11 from Arabidopsis thaliana (Mouse-ear cress).